Reading from the N-terminus, the 382-residue chain is D-galactonate dehydratase (382 aa).

Residue Asp-183 coordinates Mg(2+). Catalysis depends on His-185, which acts as the Proton donor. Mg(2+) is bound by residues Glu-209 and Glu-235. His-285 functions as the Proton acceptor in the catalytic mechanism.

This sequence belongs to the mandelate racemase/muconate lactonizing enzyme family. GalD subfamily. Mg(2+) serves as cofactor.

It catalyses the reaction D-galactonate = 2-dehydro-3-deoxy-D-galactonate + H2O. The protein operates within carbohydrate acid metabolism; D-galactonate degradation; D-glyceraldehyde 3-phosphate and pyruvate from D-galactonate: step 1/3. Functionally, catalyzes the dehydration of D-galactonate to 2-keto-3-deoxy-D-galactonate. The sequence is that of D-galactonate dehydratase from Klebsiella pneumoniae subsp. pneumoniae (strain ATCC 700721 / MGH 78578).